We begin with the raw amino-acid sequence, 523 residues long: Glycerate kinase (523 aa).

Ser60 bears the Phosphoserine mark. An N6-acetyllysine modification is found at Lys200.

Belongs to the glycerate kinase type-2 family. As to expression, expressed in the hippocampus, callus, brain, cerebellum, renal cortex interstitial cells, epithelium of interlobular bile duct and skeletal muscle.

The protein localises to the cytoplasm. It catalyses the reaction (R)-glycerate + ATP = (2R)-3-phosphoglycerate + ADP + H(+). This is Glycerate kinase (Glyctk) from Mus musculus (Mouse).